The following is a 374-amino-acid chain: DNA replication and repair protein RecF (374 aa).

Residue 34-41 (GDNGAGKT) participates in ATP binding.

This sequence belongs to the RecF family.

The protein resides in the cytoplasm. In terms of biological role, the RecF protein is involved in DNA metabolism; it is required for DNA replication and normal SOS inducibility. RecF binds preferentially to single-stranded, linear DNA. It also seems to bind ATP. The chain is DNA replication and repair protein RecF from Rhizobium johnstonii (strain DSM 114642 / LMG 32736 / 3841) (Rhizobium leguminosarum bv. viciae).